The sequence spans 457 residues: Squalene epoxidase erg1 (457 aa).

Residues 15-16 (IT), 35-36 (ER), R43, R114, V130, D293, and M306 each bind FAD. A run of 3 helical transmembrane segments spans residues 347 to 364 (GYSF…KLFT), 409 to 429 (FYAV…ALLM), and 433 to 453 (IIES…YILS).

This sequence belongs to the squalene monooxygenase family. It depends on FAD as a cofactor.

It localises to the microsome membrane. The protein localises to the endoplasmic reticulum membrane. It is found in the vacuole membrane. The catalysed reaction is squalene + reduced [NADPH--hemoprotein reductase] + O2 = (S)-2,3-epoxysqualene + oxidized [NADPH--hemoprotein reductase] + H2O + H(+). It functions in the pathway terpene metabolism; lanosterol biosynthesis; lanosterol from farnesyl diphosphate: step 2/3. It participates in steroid metabolism; ergosterol biosynthesis. With respect to regulation, activity is blocked by the allylamine class antifungal terbinafine. Its function is as follows. Squalene epoxidase; part of the third module of ergosterol biosynthesis pathway that includes by the late steps of the pathway. Erg1 catalyzes the epoxidation of squalene into 2,3-epoxysqualene. The third module or late pathway involves the ergosterol synthesis itself through consecutive reactions that mainly occur in the endoplasmic reticulum (ER) membrane. Firstly, the squalene synthase erg9 catalyzes the condensation of 2 farnesyl pyrophosphate moieties to form squalene, which is the precursor of all steroids. Secondly, squalene is converted into lanosterol by the consecutive action of the squalene epoxidase erg1 and the lanosterol synthase erg7. The lanosterol 14-alpha-demethylase erg11/cyp1 catalyzes C14-demethylation of lanosterol to produce 4,4'-dimethyl cholesta-8,14,24-triene-3-beta-ol. In the next steps, a complex process involving various demethylation, reduction and desaturation reactions catalyzed by the C-14 reductase erg24 and the C-4 demethylation complex erg25-erg26-erg27 leads to the production of zymosterol. Erg28 likely functions in the C-4 demethylation complex reaction by tethering erg26 and Erg27 to the endoplasmic reticulum or to facilitate interaction between these proteins. Then, the sterol 24-C-methyltransferase erg6 catalyzes the methyl transfer from S-adenosyl-methionine to the C-24 of zymosterol to form fecosterol. The C-8 sterol isomerase erg2 catalyzes the reaction which results in unsaturation at C-7 in the B ring of sterols and thus converts fecosterol to episterol. The sterol-C5-desaturases erg31 and erg32 then catalyze the introduction of a C-5 double bond in the B ring to produce 5-dehydroepisterol. The C-22 sterol desaturase erg5 further converts 5-dehydroepisterol into ergosta-5,7,22,24(28)-tetraen-3beta-ol by forming the C-22(23) double bond in the sterol side chain. Finally, ergosta-5,7,22,24(28)-tetraen-3beta-ol is substrate of the C-24(28) sterol reductase erg4 to produce ergosterol. In the genus Schizosaccharomyces, a second route exists between lanosterol and fecosterol, via the methylation of lanosterol to eburicol by erg6, followed by C14-demethylation by erg11/cyp1 and C4-demethylation by the demethylation complex erg25-erg26-erg27. The chain is Squalene epoxidase erg1 from Schizosaccharomyces pombe (strain 972 / ATCC 24843) (Fission yeast).